A 120-amino-acid chain; its full sequence is Peptidyl-tRNA hydrolase (120 aa).

The protein belongs to the PTH2 family.

The protein localises to the cytoplasm. The enzyme catalyses an N-acyl-L-alpha-aminoacyl-tRNA + H2O = an N-acyl-L-amino acid + a tRNA + H(+). In terms of biological role, the natural substrate for this enzyme may be peptidyl-tRNAs which drop off the ribosome during protein synthesis. In Sulfolobus acidocaldarius (strain ATCC 33909 / DSM 639 / JCM 8929 / NBRC 15157 / NCIMB 11770), this protein is Peptidyl-tRNA hydrolase.